A 392-amino-acid chain; its full sequence is Probable tRNA sulfurtransferase (392 aa).

A THUMP domain is found at glycine 63–histidine 169. Residues leucine 187–valine 188, arginine 270, glycine 292, and glutamine 301 each bind ATP.

It belongs to the ThiI family.

The protein localises to the cytoplasm. The catalysed reaction is [ThiI sulfur-carrier protein]-S-sulfanyl-L-cysteine + a uridine in tRNA + 2 reduced [2Fe-2S]-[ferredoxin] + ATP + H(+) = [ThiI sulfur-carrier protein]-L-cysteine + a 4-thiouridine in tRNA + 2 oxidized [2Fe-2S]-[ferredoxin] + AMP + diphosphate. The enzyme catalyses [ThiS sulfur-carrier protein]-C-terminal Gly-Gly-AMP + S-sulfanyl-L-cysteinyl-[cysteine desulfurase] + AH2 = [ThiS sulfur-carrier protein]-C-terminal-Gly-aminoethanethioate + L-cysteinyl-[cysteine desulfurase] + A + AMP + 2 H(+). The protein operates within cofactor biosynthesis; thiamine diphosphate biosynthesis. Its function is as follows. Catalyzes the ATP-dependent transfer of a sulfur to tRNA to produce 4-thiouridine in position 8 of tRNAs, which functions as a near-UV photosensor. Also catalyzes the transfer of sulfur to the sulfur carrier protein ThiS, forming ThiS-thiocarboxylate. This is a step in the synthesis of thiazole, in the thiamine biosynthesis pathway. The sulfur is donated as persulfide by IscS. This Halobacterium salinarum (strain ATCC 29341 / DSM 671 / R1) protein is Probable tRNA sulfurtransferase.